Here is a 192-residue protein sequence, read N- to C-terminus: Protein FAM210B, mitochondrial (192 aa).

The N-terminal 58 residues, 1–58, are a transit peptide targeting the mitochondrion; that stretch reads MAGLLALLGPAGRVGARVRPRATWLLGATAPCAPPPLALALLPPRLDARLLRTARGDC. The segment at 57 to 80 is disordered; the sequence is DCRGHQDPSQATGTTGSSVSCTEE. The segment covering 63-77 has biased composition (polar residues); that stretch reads DPSQATGTTGSSVSC. The region spanning 80 to 191 is the DUF1279 domain; sequence EKKQSKSQQL…VGFFKPPAAK (112 aa). Transmembrane regions (helical) follow at residues 99 to 119 and 150 to 170; these read VGVS…YMVV and FVVA…ITLV.

Belongs to the FAM210 family. In terms of tissue distribution, expressed in late erythroblast differentiation stages. Underexpressed in ovarian cancer epithelia cells compared with normal human ovarian surface epithelia.

Its subcellular location is the mitochondrion. The protein localises to the mitochondrion outer membrane. In terms of biological role, plays a role in erythroid differentiation. Involved in cell proliferation and tumor cell growth suppression. Involved in the metabolic reprogramming of cancer cells in a PDK4-dependent manner. This is Protein FAM210B, mitochondrial from Homo sapiens (Human).